The following is a 92-amino-acid chain: Large ribosomal subunit protein bL25 (92 aa).

It belongs to the bacterial ribosomal protein bL25 family. As to quaternary structure, part of the 50S ribosomal subunit; part of the 5S rRNA/L5/L18/L25 subcomplex. Contacts the 5S rRNA. Binds to the 5S rRNA independently of L5 and L18.

In terms of biological role, this is one of the proteins that binds to the 5S RNA in the ribosome where it forms part of the central protuberance. The protein is Large ribosomal subunit protein bL25 of Aliivibrio fischeri (strain ATCC 700601 / ES114) (Vibrio fischeri).